The sequence spans 179 residues: Large ribosomal subunit protein uL5 (179 aa).

It belongs to the universal ribosomal protein uL5 family. Part of the 50S ribosomal subunit; part of the 5S rRNA/L5/L18/L25 subcomplex. Contacts the 5S rRNA and the P site tRNA. Forms a bridge to the 30S subunit in the 70S ribosome.

In terms of biological role, this is one of the proteins that bind and probably mediate the attachment of the 5S RNA into the large ribosomal subunit, where it forms part of the central protuberance. In the 70S ribosome it contacts protein S13 of the 30S subunit (bridge B1b), connecting the 2 subunits; this bridge is implicated in subunit movement. Contacts the P site tRNA; the 5S rRNA and some of its associated proteins might help stabilize positioning of ribosome-bound tRNAs. This Synechococcus sp. (strain RCC307) protein is Large ribosomal subunit protein uL5.